Here is a 1203-residue protein sequence, read N- to C-terminus: DNA-directed RNA polymerase subunit beta' (1203 aa).

Zn(2+) is bound by residues cysteine 60, cysteine 62, cysteine 75, and cysteine 78. Residues aspartate 449, aspartate 451, and aspartate 453 each coordinate Mg(2+). Residues cysteine 818, cysteine 892, cysteine 899, and cysteine 902 each contribute to the Zn(2+) site.

Belongs to the RNA polymerase beta' chain family. In terms of assembly, the RNAP catalytic core consists of 2 alpha, 1 beta, 1 beta' and 1 omega subunit. When a sigma factor is associated with the core the holoenzyme is formed, which can initiate transcription. It depends on Mg(2+) as a cofactor. Zn(2+) is required as a cofactor.

The enzyme catalyses RNA(n) + a ribonucleoside 5'-triphosphate = RNA(n+1) + diphosphate. DNA-dependent RNA polymerase catalyzes the transcription of DNA into RNA using the four ribonucleoside triphosphates as substrates. This Bacillus cereus (strain ATCC 14579 / DSM 31 / CCUG 7414 / JCM 2152 / NBRC 15305 / NCIMB 9373 / NCTC 2599 / NRRL B-3711) protein is DNA-directed RNA polymerase subunit beta'.